Reading from the N-terminus, the 563-residue chain is Arginine--tRNA ligase (563 aa).

The short motif at 121–131 (PNIAKPMSMGH) is the 'HIGH' region element.

The protein belongs to the class-I aminoacyl-tRNA synthetase family. Monomer.

The protein resides in the cytoplasm. It catalyses the reaction tRNA(Arg) + L-arginine + ATP = L-arginyl-tRNA(Arg) + AMP + diphosphate. The polypeptide is Arginine--tRNA ligase (Leuconostoc mesenteroides subsp. mesenteroides (strain ATCC 8293 / DSM 20343 / BCRC 11652 / CCM 1803 / JCM 6124 / NCDO 523 / NBRC 100496 / NCIMB 8023 / NCTC 12954 / NRRL B-1118 / 37Y)).